Reading from the N-terminus, the 863-residue chain is DNA mismatch repair protein MutS 2 (863 aa).

626–633 (GPNMSGKS) provides a ligand contact to ATP.

Belongs to the DNA mismatch repair MutS family.

Its function is as follows. This protein is involved in the repair of mismatches in DNA. It is possible that it carries out the mismatch recognition step. This protein has a weak ATPase activity. The polypeptide is DNA mismatch repair protein MutS 2 (mutS2) (Halobacterium salinarum (strain ATCC 700922 / JCM 11081 / NRC-1) (Halobacterium halobium)).